The primary structure comprises 725 residues: uncharacterized protein (725 aa).

The FtsK domain occupies 363 to 556; it reads GTYVEIPLYS…FVTTRPEDSC (194 aa). 382 to 389 is a binding site for ATP; that stretch reads GRTRGGKS.

Belongs to the FtsK/SpoIIIE/SftA family.

In terms of biological role, probable DNA motor protein. May track DNA in a ATP-dependent manner by generating positive supercoils in front of it and negative supercoils behind it. This is an uncharacterized protein from Nostoc sp. (strain PCC 7120 / SAG 25.82 / UTEX 2576).